The sequence spans 388 residues: Proteasomal ubiquitin receptor ADRM1 homolog rpn1302 (388 aa).

The Pru domain maps to 15–132 (RGKYGLVSVK…SLINQLIADP (118 aa)). 2 disordered regions span residues 202-227 (RASSESNLNGPHATAGENGEDHEEAT) and 368-388 (SDGEVEEEGDVEMRESNEKDE). Residues 368–377 (SDGEVEEEGD) are compositionally biased toward acidic residues. Over residues 378–388 (VEMRESNEKDE) the composition is skewed to basic and acidic residues.

The protein belongs to the ADRM1 family. Component of the 19S proteasome regulatory particle complex. The 2 S.pombe rpn13 homologs, rpn1301 and rpn1302 are present at a 0.2-1 ratio.

The protein resides in the cytoplasm. Its subcellular location is the nucleus. Its function is as follows. Component of the 26S proteasome, a multiprotein complex involved in the ATP-dependent degradation of ubiquitinated proteins. This complex plays a key role in the maintenance of protein homeostasis by removing misfolded or damaged proteins, which could impair cellular functions, and by removing proteins whose functions are no longer required. Therefore, the proteasome participates in numerous cellular processes, including cell cycle progression, apoptosis, or DNA damage repair. Within the complex, functions as a proteasomal ubiquitin receptor. The protein is Proteasomal ubiquitin receptor ADRM1 homolog rpn1302 (rpn1302) of Schizosaccharomyces pombe (strain 972 / ATCC 24843) (Fission yeast).